A 138-amino-acid chain; its full sequence is MPTINQLIRKGRVSKVENSKSPALNKGYNSFKKEHTNVSSPQKRGVCTRVGTMTPKKPNSALRKYARVRLTNGIEVTAYIPGIGHNLQEHSVVLIRGGRVKDLPGVRYHIVRGALDTAGVENRAQGRSKYGTKRPKAK.

Residues Lys-33–Pro-55 are disordered. Position 102 is a 3-methylthioaspartic acid (Asp-102).

It belongs to the universal ribosomal protein uS12 family. As to quaternary structure, part of the 30S ribosomal subunit. Contacts proteins S8 and S17. May interact with IF1 in the 30S initiation complex.

Functionally, with S4 and S5 plays an important role in translational accuracy. Its function is as follows. Interacts with and stabilizes bases of the 16S rRNA that are involved in tRNA selection in the A site and with the mRNA backbone. Located at the interface of the 30S and 50S subunits, it traverses the body of the 30S subunit contacting proteins on the other side and probably holding the rRNA structure together. The combined cluster of proteins S8, S12 and S17 appears to hold together the shoulder and platform of the 30S subunit. This chain is Small ribosomal subunit protein uS12, found in Bacillus velezensis (strain DSM 23117 / BGSC 10A6 / LMG 26770 / FZB42) (Bacillus amyloliquefaciens subsp. plantarum).